The primary structure comprises 163 residues: ATP synthase subunit b (163 aa).

A helical transmembrane segment spans residues 10–29 (ALYQLLAFSVLLFFLSKFAL).

This sequence belongs to the ATPase B chain family. In terms of assembly, F-type ATPases have 2 components, F(1) - the catalytic core - and F(0) - the membrane proton channel. F(1) has five subunits: alpha(3), beta(3), gamma(1), delta(1), epsilon(1). F(0) has three main subunits: a(1), b(2) and c(10-14). The alpha and beta chains form an alternating ring which encloses part of the gamma chain. F(1) is attached to F(0) by a central stalk formed by the gamma and epsilon chains, while a peripheral stalk is formed by the delta and b chains.

Its subcellular location is the cell membrane. F(1)F(0) ATP synthase produces ATP from ADP in the presence of a proton or sodium gradient. F-type ATPases consist of two structural domains, F(1) containing the extramembraneous catalytic core and F(0) containing the membrane proton channel, linked together by a central stalk and a peripheral stalk. During catalysis, ATP synthesis in the catalytic domain of F(1) is coupled via a rotary mechanism of the central stalk subunits to proton translocation. In terms of biological role, component of the F(0) channel, it forms part of the peripheral stalk, linking F(1) to F(0). The protein is ATP synthase subunit b of Alkalihalophilus pseudofirmus (strain ATCC BAA-2126 / JCM 17055 / OF4) (Bacillus pseudofirmus).